A 567-amino-acid chain; its full sequence is Glucose-6-phosphate isomerase, cytosolic (567 aa).

The active-site Proton donor is Glu-360. Active-site residues include His-391 and Lys-516.

The protein belongs to the GPI family. As to quaternary structure, homodimer.

It localises to the cytoplasm. The enzyme catalyses alpha-D-glucose 6-phosphate = beta-D-fructose 6-phosphate. It functions in the pathway carbohydrate degradation; glycolysis; D-glyceraldehyde 3-phosphate and glycerone phosphate from D-glucose: step 2/4. The protein is Glucose-6-phosphate isomerase, cytosolic (PHI1) of Zea mays (Maize).